The chain runs to 301 residues: Ribonuclease HIII (301 aa).

In terms of domain architecture, RNase H type-2 spans 90-301; sequence TPHIGIDESG…LDAILGKVGK (212 aa). A divalent metal cation contacts are provided by aspartate 96, glutamate 97, and aspartate 198.

The protein belongs to the RNase HII family. RnhC subfamily. Mn(2+) serves as cofactor. It depends on Mg(2+) as a cofactor.

The protein resides in the cytoplasm. It catalyses the reaction Endonucleolytic cleavage to 5'-phosphomonoester.. Its function is as follows. Endonuclease that specifically degrades the RNA of RNA-DNA hybrids. The polypeptide is Ribonuclease HIII (Protochlamydia amoebophila (strain UWE25)).